The primary structure comprises 331 residues: Aspartate carbamoyltransferase catalytic subunit (331 aa).

Arg66 and Thr67 together coordinate carbamoyl phosphate. Lys94 contacts L-aspartate. 3 residues coordinate carbamoyl phosphate: Arg116, His149, and Gln152. Positions 189 and 243 each coordinate L-aspartate. 2 residues coordinate carbamoyl phosphate: Gly284 and Pro285.

This sequence belongs to the aspartate/ornithine carbamoyltransferase superfamily. ATCase family. As to quaternary structure, heterododecamer (2C3:3R2) of six catalytic PyrB chains organized as two trimers (C3), and six regulatory PyrI chains organized as three dimers (R2).

The enzyme catalyses carbamoyl phosphate + L-aspartate = N-carbamoyl-L-aspartate + phosphate + H(+). The protein operates within pyrimidine metabolism; UMP biosynthesis via de novo pathway; (S)-dihydroorotate from bicarbonate: step 2/3. Catalyzes the condensation of carbamoyl phosphate and aspartate to form carbamoyl aspartate and inorganic phosphate, the committed step in the de novo pyrimidine nucleotide biosynthesis pathway. This is Aspartate carbamoyltransferase catalytic subunit from Thermosynechococcus vestitus (strain NIES-2133 / IAM M-273 / BP-1).